Here is a 480-residue protein sequence, read N- to C-terminus: MANARSQYRCSECRHVSAKWVGRCLECGRWGTVDEVAVLSAVGGTRRRSVAPASGAVPISAVDAHRTRPCPTGIDELDRVLGGGIVPGSVTLLAGDPGVGKSTLLLEVAHRWAQSGRRALYVSGEESAGQIRLRADRIGCGTEVEEIYLAAQSDVHTVLDQIETVQPALVIVDSVQTMSTSEADGVTGGVTQVRAVTAALTAAAKANEVALILVGHVTKDGAIAGPRSLEHLVDVVLHFEGDRNGALRMVRGVKNRFGAADEVGCFLLHDNGIDGIVDPSNLFLDQRPTPVAGTAITVTLDGKRPLVGEVQALLATPCGGSPRRAVSGIHQARAAMIAAVLEKHARLAIAVNDIYLSTVGGMRLTEPSADLAVAIALASAYANLPLPTTAVMIGEVGLAGDIRRVNGMARRLSEAARQGFTIALVPPSDDPVPPGMHALRASTIVAALQYMVDIADHRGTTLATPPSHSGTGHVPLGRGT.

Residues Cys-10–Cys-27 form a C4-type zinc finger. An ATP-binding site is contributed by Gly-95–Ser-102. Residues Lys-254–Gly-258 carry the RadA KNRFG motif motif. The segment at Asp-353–Thr-480 is lon-protease-like. The tract at residues Gly-459–Thr-480 is disordered. The span at Thr-461–Gly-470 shows a compositional bias: polar residues.

It belongs to the RecA family. RadA subfamily.

Functionally, DNA-dependent ATPase involved in processing of recombination intermediates, plays a role in repairing DNA breaks. Stimulates the branch migration of RecA-mediated strand transfer reactions, allowing the 3' invading strand to extend heteroduplex DNA faster. Binds ssDNA in the presence of ADP but not other nucleotides, has ATPase activity that is stimulated by ssDNA and various branched DNA structures, but inhibited by SSB. Does not have RecA's homology-searching function. This chain is DNA repair protein RadA, found in Mycobacterium tuberculosis (strain CDC 1551 / Oshkosh).